The following is a 778-amino-acid chain: Kin of IRRE-like protein 3 (778 aa).

A signal peptide spans 1–21 (MRPFQLDLLFLCFFLFSQELG). Residues 22–535 (LQKRGCCLVL…GLEAESVPMA (514 aa)) are Extracellular-facing. 5 consecutive Ig-like C2-type domains span residues 48–142 (YSFS…ARLT), 147–243 (PDDP…TSVT), 249–330 (PPLV…RTVD), 335–415 (PRMT…VTLT), and 419–515 (PPII…IRLK). Residues Cys69 and Cys127 are joined by a disulfide bond. N-linked (GlcNAc...) asparagine glycosylation is present at Asn167. Cys170 and Cys227 are oxidised to a cystine. N-linked (GlcNAc...) asparagine glycosylation occurs at Asn253. Cys271 and Cys314 are disulfide-bonded. An N-linked (GlcNAc...) asparagine glycan is attached at Asn324. Cystine bridges form between Cys356–Cys398 and Cys440–Cys499. Asn498 carries an N-linked (GlcNAc...) asparagine glycan. A helical transmembrane segment spans residues 536 to 556 (VIIGVAVGAGVAFLVLMATIV). The Cytoplasmic segment spans residues 557 to 778 (AFCCARSQRN…PLQRRMQTHV (222 aa)). Residues 727-736 (CDSSVSSSGK) show a composition bias toward polar residues. A disordered region spans residues 727–778 (CDSSVSSSGKQDGYVQFDKASKASASSSHHSQSSSQNSDPSRPLQRRMQTHV). The segment covering 748–762 (KASASSSHHSQSSSQ) has biased composition (low complexity).

The protein belongs to the immunoglobulin superfamily. As to quaternary structure, homodimer; mediates homophilic interactions to promote cell adhesion. Interacts with NPHS1; forms heterodimers with NPHS1. Interacts with NPHS2/podocin (via the C-terminus). Interacts with CASK. Interacts (via extracellular region) with MAP1B. Interacts (via extracellular region) with MYO16. Interacts (via intracellular region) with ATP1B1. Interacts (via intracellular region) with SHMT2. Interacts (via intracellular region) with UFC1. Post-translationally, undergoes proteolysis by a metalloprotease and gives rise to a soluble form. Expressed mainly in adult brain, bone marrow and stromal cells. Expressed in diverse regions of the brain, including the cortex, hippocampus, striatum, olfactory bulb and cerebellum. In brain, expressed in pontine nucleus neurons (at protein level). In hippocampus, produced in both the dentate granule neurons and the GABAergic neurons, but not the CA3 neurons. Expressed in subpopulations of vomeronasal sensory neurons. Expressed in a subset of neurons in dorsal root ganglia.

The protein localises to the cell membrane. It localises to the cell projection. Its subcellular location is the axon. The protein resides in the dendrite. It is found in the secreted. Its function is as follows. Synaptic adhesion molecule required for the formation of target-specific synapses. Required for formation of target-specific synapses at hippocampal mossy fiber synapses. Required for formation of mossy fiber filopodia, the synaptic structures connecting dentate granule and GABA neurons. Probably acts as a homophilic adhesion molecule that promotes trans-cellular interactions and stabilize mossy fiber filipodia contact and subsequent synapse formation. Required for the coalescence of vomeronasal sensory neuron axons. May be involved in the hematopoietic supportive capacity of stroma cells; the secreted extracellular domain is directly responsible for supporting hematopoietic stem cells. This chain is Kin of IRRE-like protein 3 (Kirrel3), found in Mus musculus (Mouse).